A 404-amino-acid polypeptide reads, in one-letter code: Sorting nexin-5 (404 aa).

Alanine 2 carries the post-translational modification N-acetylalanine. The region spanning 25-172 (LNVDPSLQID…HVFLEYDQDL (148 aa)) is the PX domain. A 1,2-diacyl-sn-glycero-3-phospho-(1D-myo-inositol-4,5-bisphosphate) is bound by residues 40-46 (SERDKVK), 99-105 (FDGPREK), and 113-116 (EGSM). Residues 169 to 261 (DQDLSVRRKN…HSLALEEPTV (93 aa)) form an interaction with DOCK1 region. Residues 183-200 (FGGFFKSVVKSADEVLFS) are membrane-binding amphipathic helix. Serine 193 carries the phosphoserine modification. The region spanning 202–404 (VKEVDDFFEQ…QSCIDLFKNN (203 aa)) is the BAR domain. The residue at position 275 (lysine 275) is an N6-acetyllysine.

The protein belongs to the sorting nexin family. Forms heterodimers with BAR domain-containing sorting nexins SNX1 and SNX2; does not homodimerize. The heterodimers are proposed to self-assemble into helical arrays on the membrane to stabilize and expand local membrane curvature underlying endosomal tubule formation. Thought to be a component of the originally described retromer complex (also called SNX-BAR retromer) which is a pentamer containing the heterotrimeric retromer cargo-selective complex (CSC), also described as vacuolar protein sorting subcomplex (VPS), and a heterodimeric membrane-deforming subcomplex formed between SNX1 or SNX2 and SNX5 or SNX6 (also called SNX-BAR subcomplex); the respective CSC and SNX-BAR subcomplexes associate with low affinity. Interacts with SNX1, SNX2, VPS26A, VPS29, VPS35, DCTN1, DOCK1, MIB1, PIP5K1C. Interacts with HGS; increased by PIP5K1C kinase activity and by PtdIns(3P) and/or PtdIns(3,4)P2.

It is found in the endosome. The protein resides in the early endosome. Its subcellular location is the early endosome membrane. It localises to the cell membrane. The protein localises to the cytoplasmic vesicle membrane. It is found in the cytoplasm. The protein resides in the cell projection. Its subcellular location is the phagocytic cup. It localises to the ruffle. Functionally, involved in several stages of intracellular trafficking. Interacts with membranes containing phosphatidylinositol lipids. Acts in part as component of the retromer membrane-deforming SNX-BAR subcomplex. The SNX-BAR retromer mediates retrograde transport of cargo proteins from endosomes to the trans-Golgi network (TGN) and is involved in endosome-to-plasma membrane transport for cargo protein recycling. The SNX-BAR subcomplex functions to deform the donor membrane into a tubular profile called endosome-to-TGN transport carrier (ETC). Does not have in vitro vesicle-to-membrane remodeling activity. Involved in retrograde transport of lysosomal enzyme receptor IGF2R. May function as link between endosomal transport vesicles and dynactin. Plays a role in the internalization of EGFR after EGF stimulation. Involved in EGFR endosomal sorting and degradation; the function involves PIP5K1C and is retromer-independent. Together with PIP5K1C facilitates HGS interaction with ubiquitinated EGFR, which initiates EGFR sorting to intraluminal vesicles (ILVs) of the multivesicular body for subsequent lysosomal degradation. Involved in E-cadherin sorting and degradation; inhibits PIP5K1C-mediated E-cadherin degradation. Plays a role in macropinocytosis. In Bos taurus (Bovine), this protein is Sorting nexin-5 (SNX5).